A 1585-amino-acid chain; its full sequence is MTLSTEESIEMFGDINLTLGMLNKEDIVNKEDIYSHLTSVIQNTDILDDAIVQRLIYYASKDMRDNNMLREIRMLAGEVLVSLAAHDFNSVMYEVQSNFRILELPDEFVVLALAELATSYVSQSIPFMMMTLLTMQTMLRLAEDERMKGTFCIALEKFSKAIYKYVNHWRDFPYPRLDANRLSDKIFMLFWYIMEKWAPLASPMQTLSIVKAHGPTVSLLLHREDFRGYALGQVPWLLNQYKDKEIDFHVTQSLKQILTAAVLYDIGLPRSLRRSIFINLLQQICRAPEPPVKENEMKASSCFLILAHSNPGELMEFFDEQVRSNNEAIRVGILTLLRLAVNADEPRLRDHIISIERTVKIVMGDLSTKVRNSVLLLIQTMCEKSYIEAREGWPLIDYVFSQFATLNRNLEKPVKTNFHENEKEEESVRETSLEVLKTLDPLVIGMPQVLWPRILTFVVPAEYTEALEPLFSIIRILIMAEEKKQHSAKESTALVVSTGAVKLPSPQQLLARLLVISMPASLGELRGAGAIGLLKILPEIIHPKLVDLWKTRLPELLQPLEGKNISTVLWETMLLQLLKESLWKISDVAWTIQLTQDFKQQMGSYSNNSTEKKFLWKALGTTLACCQDSDFVNSQIKEFLTAPNQLGDQRQGITSILGYCAENHLDIVLKVLKTFQNQEKFFMNRCKSLFSGKKSLTKTDVMVIYGAVALHAPKKQLLSRLNQDIISQVLSLHGQCSQVLGMSVMNKDMDLQMSFTRSITEIGIAVQDAEDQGFQFSYKEMLIGYMLDFIRDEPLDSLASPIRWKALIAIRYLSKLKPQLSLQDHLNILEENIRRLLPLPPLENLKSEGQTDKDKEHIQFLYERSMDALGKLLKTMMWDNVNAEDCQEMFNLLQMWLVSQKEWERERAFQITAKVLTNDIEAPENFKIGSLLGLLAPHSCDTLPTIRQAAASSTIGLFYIKGIHLEVERLQGLQEGLESDDVQVQIKISSKIAKIVSKFIPNEEILMFLEEMLDGLESLNPTCTKACGIWMITVLKQQGAALEDQLLEILGTIYHHMPVLRQKEESFQFILEAISQIASFHMDTVVVNLLQKPLPFDRDTKTLWKALAEKPASSGKLLQALIDKLETELEDDIARVEAISVACAMYEVISMGTSVTGLYPELFTLLLKLVSCTLGQKMLTCPWSHRRHVMQQGEQQQIPDPCRLSTATLKCLQAQAMREGLAKESDEGDNLWTLLSSPSTHHIGVCSLARSMAVWQHGVILDIMEQLLSSLTSSSENYRITGAAFFSELMKEPILWKHGNLRNVLILMDQSAWDSNATLRQMAIRGLGNTASGAPHKVKKHKQLMLESIIRGLYHLARTEVVCESLKALKKILELLTDRDVSFYFKEIVLQTRTFFEDEQDDVRLTAIFLFEDLAPLTGRRWKIFFAEEIKKSLISFLLHLWDPNPKIGVACRDVLMVCIPFLGLQELYGVLDRLLDQDLPRARDFYRQFCVKLAKKNQEILWILHTHSFTFFTSTWEVIRSAAVKLTDAVVLNLTSQYVELLDREQLTTRLQALRQDPCISVQRAAEAALQTLLRRCKETSIPL.

15 HEAT repeats span residues 28–65 (VNKE…DMRD), 228–263 (GYAL…AAVL), 272–309 (LRRS…LAHS), 310–346 (NPGE…ADEP), 405–445 (TLNR…LVIG), 531–569 (IGLL…STVL), 572–611 (TMLL…NSTE), 662–699 (ENHL…LTKT), 777–819 (SYKE…LKPQ), 964–1001 (HLEV…KFIP), 1021–1059 (PTCT…HMPV), 1112–1151 (ASSG…VISM), 1157–1195 (GLYP…QGEQ), 1258–1295 (GVIL…EPIL), and 1363–1402 (CESL…EQDD).

In terms of assembly, found in a complex at least composed of MROH2B, PRKACA isoform 2 and TCP11. Interacts with PRKACA. Interacts with TCP11. Constitutively phosphorylated on serine and threonine residues in acrosomal region of the sperm head, midpiece and flagellar regions of noncapacitated spermatozoa. Phosphorylation on tyrosine residues increases upon sperm capacitation within the acrosomal and tail regions in a protein kinase A (PKA)-dependent signaling pathway.

The protein localises to the cytoplasm. The protein resides in the cytoplasmic vesicle. Its subcellular location is the secretory vesicle. It is found in the acrosome. It localises to the cell projection. The protein localises to the cilium. The protein resides in the flagellum. Functionally, may play a role in the process of sperm capacitation. The sequence is that of Maestro heat-like repeat-containing protein family member 2B from Homo sapiens (Human).